We begin with the raw amino-acid sequence, 361 residues long: Tyrosine--tRNA ligase (361 aa).

Tyr-36, Tyr-162, Gln-166, Asp-169, and Gln-184 together coordinate L-tyrosine. The 'KMSKS' region signature appears at 236-240 (KMSKS). ATP is bound at residue Lys-239.

It belongs to the class-I aminoacyl-tRNA synthetase family. TyrS type 4 subfamily. Homodimer.

Its subcellular location is the cytoplasm. The enzyme catalyses tRNA(Tyr) + L-tyrosine + ATP = L-tyrosyl-tRNA(Tyr) + AMP + diphosphate + H(+). In terms of biological role, catalyzes the attachment of tyrosine to tRNA(Tyr) in a two-step reaction: tyrosine is first activated by ATP to form Tyr-AMP and then transferred to the acceptor end of tRNA(Tyr). This is Tyrosine--tRNA ligase from Saccharolobus islandicus (strain Y.N.15.51 / Yellowstone #2) (Sulfolobus islandicus).